The following is a 119-amino-acid chain: Large ribosomal subunit protein bL20 (119 aa).

The protein belongs to the bacterial ribosomal protein bL20 family.

Its function is as follows. Binds directly to 23S ribosomal RNA and is necessary for the in vitro assembly process of the 50S ribosomal subunit. It is not involved in the protein synthesizing functions of that subunit. The protein is Large ribosomal subunit protein bL20 of Streptococcus pyogenes serotype M1.